The primary structure comprises 216 residues: Guanylate kinase (216 aa).

The Guanylate kinase-like domain occupies 11–189 (GVLIVISGPS…AVKKIEAILL (179 aa)). 18–25 (GPSGAGKG) contacts ATP.

This sequence belongs to the guanylate kinase family.

Its subcellular location is the cytoplasm. It catalyses the reaction GMP + ATP = GDP + ADP. Its function is as follows. Essential for recycling GMP and indirectly, cGMP. The sequence is that of Guanylate kinase from Clostridium perfringens (strain ATCC 13124 / DSM 756 / JCM 1290 / NCIMB 6125 / NCTC 8237 / Type A).